The primary structure comprises 69 residues: MPLTVNCPICKTPVEWVPQSEFKPFCSERCKMIDLGDWASEKHAIPVKSEFDLDALDELGYDEESFFKE.

Zn(2+) contacts are provided by cysteine 7, cysteine 10, cysteine 26, and cysteine 30.

Belongs to the DNA gyrase inhibitor YacG family. Interacts with GyrB. It depends on Zn(2+) as a cofactor.

Its function is as follows. Inhibits all the catalytic activities of DNA gyrase by preventing its interaction with DNA. Acts by binding directly to the C-terminal domain of GyrB, which probably disrupts DNA binding by the gyrase. This Shewanella sp. (strain ANA-3) protein is DNA gyrase inhibitor YacG.